The primary structure comprises 353 residues: MAERGAHITTTSASDDRPSIFEVVAQESLMAAARPALHHIVKVLAESNPSRYGTLWRWFDELYTLLDWLLQQHYLSWASASFSENFYGLKRITLGKEVGQRNLPRKEYWKSLLLLVLIPYLRVKLEKIVNRLREEQDYSIQNPTSFHKRCYKAILASYPFVKLGWEAWFLFYQLRYILWNGKNHSPLLRLAGVQLTRLTMEDLHAMEKQEEMTNTLSNAVSLSQRIRSILKKALGAVALSVSSSLSLGVFFLQFLDWWYSAENQETLKSLNNLPVPPPPIHFELETYSPLLPKLKTVCPLCRKVRVNDTALGTSGYVFCYRCAYYYVKTHQRCPVSGYPTELQHLIKLYTPDG.

Residues 1–19 (MAERGAHITTTSASDDRPS) lie on the Peroxisomal matrix side of the membrane. A helical membrane pass occupies residues 20 to 47 (IFEVVAQESLMAAARPALHHIVKVLAES). Residues 48–51 (NPSR) are Cytoplasmic-facing. The helical transmembrane segment at 52 to 76 (YGTLWRWFDELYTLLDWLLQQHYLS) threads the bilayer. Residues 77-104 (WASASFSENFYGLKRITLGKEVGQRNLP) are Peroxisomal matrix-facing. The chain crosses the membrane as a helical span at residues 105 to 134 (RKEYWKSLLLLVLIPYLRVKLEKIVNRLRE). The Cytoplasmic portion of the chain corresponds to 135-139 (EQDYS). Residues 140–178 (IQNPTSFHKRCYKAILASYPFVKLGWEAWFLFYQLRYIL) traverse the membrane as a helical segment. Residues 179–243 (WNGKNHSPLL…LGAVALSVSS (65 aa)) lie on the Peroxisomal matrix side of the membrane. The chain crosses the membrane as a helical span at residues 244–271 (SLSLGVFFLQFLDWWYSAENQETLKSLN). Over 272 to 353 (NLPVPPPPIH…HLIKLYTPDG (82 aa)) the chain is Cytoplasmic. Residues Cys-298, Cys-301, Cys-319, and Cys-322 each contribute to the Zn(2+) site. The segment at 298–337 (CPLCRKVRVNDTALGTSGYVFCYRCAYYYVKTHQRCPVSG) adopts an RING-type; degenerate zinc-finger fold.

The protein belongs to the pex2/pex10/pex12 family. As to quaternary structure, component of the PEX2-PEX10-PEX12 retrotranslocation channel.

Its subcellular location is the peroxisome membrane. The protein operates within protein modification; protein ubiquitination. Its function is as follows. Component of a retrotranslocation channel required for peroxisome organization by mediating export of the PEX5 receptor from peroxisomes to the cytosol, thereby promoting PEX5 recycling. The retrotranslocation channel is composed of PEX2, PEX10 and PEX12; each subunit contributing transmembrane segments that coassemble into an open channel that specifically allows the passage of PEX5 through the peroxisomal membrane. PEX12 also regulates PEX5 recycling by activating the E3 ubiquitin-protein ligase activity of PEX10. When PEX5 recycling is compromised, PEX12 stimulates PEX10-mediated polyubiquitination of PEX5, leading to its subsequent degradation. This Xenopus laevis (African clawed frog) protein is Peroxisome assembly protein 12-A.